Consider the following 427-residue polypeptide: Retron Mx65 reverse transcriptase (427 aa).

In terms of domain architecture, Reverse transcriptase spans 136–366 (RHYSIHRPRE…GAQRVTGVTV (231 aa)). Residues aspartate 219, aspartate 315, and aspartate 316 each contribute to the Mg(2+) site.

The protein belongs to the bacterial reverse transcriptase family.

The enzyme catalyses DNA(n) + a 2'-deoxyribonucleoside 5'-triphosphate = DNA(n+1) + diphosphate. Reverse transcriptase (RT) responsible for synthesis of msDNA-Mx65 (a branched molecule with RNA linked by a 2',5'-phosphodiester bond to ssDNA). The retron transcript serves as primer (from a conserved internal G residue) and template for the reaction, and codes for the RT. The retron is involved in antiviral defense. In Myxococcus xanthus, this protein is Retron Mx65 reverse transcriptase.